The sequence spans 140 residues: PDZ domain-containing protein 11 (140 aa).

Positions 47–129 (TVVLKKPPGA…ITMRVRYFPY (83 aa)) constitute a PDZ domain.

The protein localises to the cytoplasm. This is PDZ domain-containing protein 11 (PDZD11) from Gallus gallus (Chicken).